The primary structure comprises 293 residues: 4-hydroxy-tetrahydrodipicolinate synthase (293 aa).

Position 47 (threonine 47) interacts with pyruvate. Tyrosine 135 serves as the catalytic Proton donor/acceptor. Residue lysine 163 is the Schiff-base intermediate with substrate of the active site. Valine 205 is a binding site for pyruvate.

Belongs to the DapA family. In terms of assembly, homotetramer; dimer of dimers.

It localises to the cytoplasm. The enzyme catalyses L-aspartate 4-semialdehyde + pyruvate = (2S,4S)-4-hydroxy-2,3,4,5-tetrahydrodipicolinate + H2O + H(+). It participates in amino-acid biosynthesis; L-lysine biosynthesis via DAP pathway; (S)-tetrahydrodipicolinate from L-aspartate: step 3/4. In terms of biological role, catalyzes the condensation of (S)-aspartate-beta-semialdehyde [(S)-ASA] and pyruvate to 4-hydroxy-tetrahydrodipicolinate (HTPA). The chain is 4-hydroxy-tetrahydrodipicolinate synthase from Methylibium petroleiphilum (strain ATCC BAA-1232 / LMG 22953 / PM1).